The following is a 564-amino-acid chain: Chaperonin GroEL 2 (564 aa).

ATP is bound by residues 29–32 (TIGP), 86–90 (DGTTT), Gly-413, and Asp-493. Positions 521–541 (DKPEPPAPAGDGGGDPMGGMG) are disordered. Over residues 530-541 (GDGGGDPMGGMG) the composition is skewed to gly residues.

Belongs to the chaperonin (HSP60) family. Forms a cylinder of 14 subunits composed of two heptameric rings stacked back-to-back. Interacts with the co-chaperonin GroES.

It localises to the cytoplasm. The enzyme catalyses ATP + H2O + a folded polypeptide = ADP + phosphate + an unfolded polypeptide.. In terms of biological role, together with its co-chaperonin GroES, plays an essential role in assisting protein folding. The GroEL-GroES system forms a nano-cage that allows encapsulation of the non-native substrate proteins and provides a physical environment optimized to promote and accelerate protein folding. This is Chaperonin GroEL 2 from Prochlorococcus marinus (strain MIT 9303).